Reading from the N-terminus, the 508-residue chain is Citrate lyase alpha chain (508 aa).

In terms of assembly, oligomer with a subunit composition of (alpha,beta,gamma)6.

The protein resides in the cytoplasm. The enzyme catalyses citrate = oxaloacetate + acetate. The catalysed reaction is citrate + acetyl-CoA = (3S)-citryl-CoA + acetate. Its function is as follows. Represents a citrate:acetyl-ACP transferase. This Klebsiella pneumoniae protein is Citrate lyase alpha chain (citF).